We begin with the raw amino-acid sequence, 415 residues long: MATAKLISQKAKAHAPSLSQATTAEKNSVLQAMAQQLKADADVLLQANQLDIANAKKNGLSDHLIDRLLLTKARIDAMATAIDHLIELPEPIGAVKEEIKRPNGLVIKEMVVPFGVVGMIYEARPNVTVDACTLAVKTGNAVVLRGSASALHSNKAIVHTLKKAFQNSPIHPDVIQLLEDTSKEEAANMMQLKSTIDVLIPRGGANLIQTVLQEATIPVIETGVGNCHVYVASSADPDMAFDIVVNAKTQRPSVCNACETLLVEQSFAKAHLPALVERLSAKGVSLVGNEGACTLDPRIAQANEDDWSTEYLDLRLAIRVVADTNEAIAHINQYGTKHSEAIITESLAERDTFFATVDAACVYHNASTRFTDGFEFGFGAEIGISTQKLHARGPMGLKALTTSKYGIYGEGQVKE.

This sequence belongs to the gamma-glutamyl phosphate reductase family.

The protein resides in the cytoplasm. The catalysed reaction is L-glutamate 5-semialdehyde + phosphate + NADP(+) = L-glutamyl 5-phosphate + NADPH + H(+). The protein operates within amino-acid biosynthesis; L-proline biosynthesis; L-glutamate 5-semialdehyde from L-glutamate: step 2/2. Catalyzes the NADPH-dependent reduction of L-glutamate 5-phosphate into L-glutamate 5-semialdehyde and phosphate. The product spontaneously undergoes cyclization to form 1-pyrroline-5-carboxylate. The protein is Gamma-glutamyl phosphate reductase of Shouchella clausii (strain KSM-K16) (Alkalihalobacillus clausii).